The chain runs to 602 residues: Alpha-glucosides permease MPH3 (602 aa).

Topologically, residues 1–106 (MKNLSFLINR…AAAWSLLVST (106 aa)) are cytoplasmic. A helical membrane pass occupies residues 107–127 (TLIMEGYDTAILGAFYALPIF). Topologically, residues 128–142 (QRKFGSQNDKTGEWE) are extracellular. Residues 143–163 (ISASWQIGLTLCYMAGEIVGL) form a helical membrane-spanning segment. Residues 164-178 (QLTGPSVDLVGNRYT) are Cytoplasmic-facing. The chain crosses the membrane as a helical span at residues 179–199 (LIIALFFLAAFTFILYFCNSL). A topological domain (extracellular) is located at residue G200. Residues 201-221 (MIAVGQALCGMPWGCFQCLTV) form a helical membrane-spanning segment. Over 222–234 (SYASEICPLALRY) the chain is Cytoplasmic. Residues 235 to 255 (YLTTYSNLCWLFGQLFAAGIM) form a helical membrane-spanning segment. At 256-270 (KNSQKKYADSELGYK) the chain is on the extracellular side. The chain crosses the membrane as a helical span at residues 271–291 (LPFALQWILPVPLALGIFFAP). At 292 to 363 (ESPWWLVKKG…EDKINRRRTR (72 aa)) the chain is on the cytoplasmic side. The chain crosses the membrane as a helical span at residues 364-384 (ITCLCWAGQATCGSILIGYST). The Extracellular segment spans residues 385–397 (YFYEKAGVSTEMS). A helical membrane pass occupies residues 398 to 418 (FTFSIIQYCLGICATFLSWWA). Topologically, residues 419–426 (SKYFGRYD) are cytoplasmic. A helical membrane pass occupies residues 427 to 447 (LYAFGLAFQTIVFFIIGGLGC). Topologically, residues 448–459 (SSTHGSKMGSGS) are extracellular. The chain crosses the membrane as a helical span at residues 460–480 (LLMAVAFFYNLGIAPVVFCLV). The Cytoplasmic portion of the chain corresponds to 481–492 (SEMPSSRLRTKT). The chain crosses the membrane as a helical span at residues 493–513 (IILARNTYNVVSIICSVLILY). At 514-525 (QLNSKKWNWGAK) the chain is on the extracellular side. Residues 526 to 546 (SGFFWGVLCFCTLIWAVVDLP) form a helical membrane-spanning segment. Topologically, residues 547-602 (ETAGKTFVEINELFKLGVSARKFKSTKVDPFVVKNTPKYVSHNDPKGDIEASIAEE) are cytoplasmic.

It belongs to the major facilitator superfamily. Sugar transporter (TC 2.A.1.1) family.

The protein resides in the cell membrane. High-affinity uptake of maltose and maltotriose. Also transports alpha-methylglucoside, glucose and turanose but not melezitose or trehalose. This is Alpha-glucosides permease MPH3 (MPH3) from Saccharomyces cerevisiae (strain YJM789) (Baker's yeast).